The primary structure comprises 136 residues: Biopolymer transport protein exbD2 (136 aa).

The Cytoplasmic segment spans residues 1–23 (MAFSTGGNRGPMADINVTPLVDV). Residues 24 to 44 (MLVLLIIFIVTAPIMTYPIAV) form a helical membrane-spanning segment. Over 45-136 (DLPQRVLNPP…SQMKKIGFMQ (92 aa)) the chain is Periplasmic.

The protein belongs to the ExbD/TolR family. As to quaternary structure, the accessory proteins ExbB and ExbD seem to form a complex with TonB.

Its subcellular location is the cell inner membrane. Involved in the TonB-dependent energy-dependent transport of various receptor-bound substrates. In Xanthomonas campestris pv. campestris (strain ATCC 33913 / DSM 3586 / NCPPB 528 / LMG 568 / P 25), this protein is Biopolymer transport protein exbD2 (exbD2).